A 535-amino-acid chain; its full sequence is Bifunctional purine biosynthesis protein PurH (535 aa).

The region spanning 6 to 151 is the MGS-like domain; it reads TRLPIRRALI…KNHKDVAIVV (146 aa).

This sequence belongs to the PurH family.

The catalysed reaction is (6R)-10-formyltetrahydrofolate + 5-amino-1-(5-phospho-beta-D-ribosyl)imidazole-4-carboxamide = 5-formamido-1-(5-phospho-D-ribosyl)imidazole-4-carboxamide + (6S)-5,6,7,8-tetrahydrofolate. It catalyses the reaction IMP + H2O = 5-formamido-1-(5-phospho-D-ribosyl)imidazole-4-carboxamide. The protein operates within purine metabolism; IMP biosynthesis via de novo pathway; 5-formamido-1-(5-phospho-D-ribosyl)imidazole-4-carboxamide from 5-amino-1-(5-phospho-D-ribosyl)imidazole-4-carboxamide (10-formyl THF route): step 1/1. It functions in the pathway purine metabolism; IMP biosynthesis via de novo pathway; IMP from 5-formamido-1-(5-phospho-D-ribosyl)imidazole-4-carboxamide: step 1/1. The sequence is that of Bifunctional purine biosynthesis protein PurH from Pseudomonas fluorescens (strain SBW25).